We begin with the raw amino-acid sequence, 265 residues long: Sulfur carrier protein FdhD (265 aa).

The active-site Cysteine persulfide intermediate is Cys-107.

It belongs to the FdhD family.

It localises to the cytoplasm. Functionally, required for formate dehydrogenase (FDH) activity. Acts as a sulfur carrier protein that transfers sulfur from IscS to the molybdenum cofactor prior to its insertion into FDH. The protein is Sulfur carrier protein FdhD of Staphylococcus aureus (strain bovine RF122 / ET3-1).